A 402-amino-acid polypeptide reads, in one-letter code: Multidrug resistance protein MdtH (402 aa).

Residues 1 to 12 (MSRVSQARNLGK) are Cytoplasmic-facing. Residues 13 to 33 (YFLLIDNMLVVLGFFVVFPLI) form a helical membrane-spanning segment. Topologically, residues 34-98 (SIRFVDQMGW…GFATMGIAHE (65 aa)) are periplasmic. Residues 99–116 (PWLLWFSCFLSGLGGTLF) traverse the membrane as a helical segment. At 117–138 (DPPRSALVVKLIRPEQRGRFFS) the chain is on the cytoplasmic side. The helical transmembrane segment at 139–159 (LLMMQDSAGAVIGALLGSWLL) threads the bilayer. The Periplasmic portion of the chain corresponds to 160–164 (QYDFR). The chain crosses the membrane as a helical span at residues 165–185 (LVCATGAILFILCALFNAWLL). The Cytoplasmic portion of the chain corresponds to 186–213 (PAWKLSTARTPVREGMRRVMSNKRFVTY). Residues 214–234 (VLTLAGYYMLAVQVMLMLPIM) traverse the membrane as a helical segment. At 235 to 243 (VNDIAGSPA) the chain is on the periplasmic side. Residues 244-264 (AVKWMYAIEACLSLTLLYPIA) form a helical membrane-spanning segment. Over 265-276 (RWSEKRFRLEHR) the chain is Cytoplasmic. Residues 277-297 (LMAGLLVMSLSMLPIGMVGNL) traverse the membrane as a helical segment. At 298–299 (QQ) the chain is on the periplasmic side. Residues 300-320 (LFTLICAFYIGSVIAEPARET) traverse the membrane as a helical segment. At 321–339 (LSASPADARARGSYMGFSR) the chain is on the cytoplasmic side. A helical transmembrane segment spans residues 340 to 360 (LGLAIGGAISYIGGGWLFDMG). The Periplasmic portion of the chain corresponds to 361-367 (KALAQPE). The helical transmembrane segment at 368–388 (LPWMMLGIIGFITFLALGWQF) threads the bilayer. The Cytoplasmic portion of the chain corresponds to 389 to 402 (SHKRTPRRMLEPGA).

It belongs to the major facilitator superfamily. DHA1 family. MdtH (TC 2.A.1.2.21) subfamily.

It is found in the cell inner membrane. The polypeptide is Multidrug resistance protein MdtH (Salmonella typhi).